A 376-amino-acid polypeptide reads, in one-letter code: Queuine tRNA-ribosyltransferase (376 aa).

The active-site Proton acceptor is the D93. Substrate is bound by residues 93-97, D147, Q190, and G217; that span reads DSGGF. Positions 248-254 are RNA binding; sequence GVGKPGD. The active-site Nucleophile is D267. Zn(2+) contacts are provided by C305, C307, C310, and H336.

Belongs to the queuine tRNA-ribosyltransferase family. In terms of assembly, homodimer. Within each dimer, one monomer is responsible for RNA recognition and catalysis, while the other monomer binds to the replacement base PreQ1. The cofactor is Zn(2+).

It carries out the reaction 7-aminomethyl-7-carbaguanine + guanosine(34) in tRNA = 7-aminomethyl-7-carbaguanosine(34) in tRNA + guanine. It participates in tRNA modification; tRNA-queuosine biosynthesis. Catalyzes the base-exchange of a guanine (G) residue with the queuine precursor 7-aminomethyl-7-deazaguanine (PreQ1) at position 34 (anticodon wobble position) in tRNAs with GU(N) anticodons (tRNA-Asp, -Asn, -His and -Tyr). Catalysis occurs through a double-displacement mechanism. The nucleophile active site attacks the C1' of nucleotide 34 to detach the guanine base from the RNA, forming a covalent enzyme-RNA intermediate. The proton acceptor active site deprotonates the incoming PreQ1, allowing a nucleophilic attack on the C1' of the ribose to form the product. After dissociation, two additional enzymatic reactions on the tRNA convert PreQ1 to queuine (Q), resulting in the hypermodified nucleoside queuosine (7-(((4,5-cis-dihydroxy-2-cyclopenten-1-yl)amino)methyl)-7-deazaguanosine). The polypeptide is Queuine tRNA-ribosyltransferase (Dinoroseobacter shibae (strain DSM 16493 / NCIMB 14021 / DFL 12)).